Reading from the N-terminus, the 249-residue chain is 14-3-3-like protein D (249 aa).

The protein belongs to the 14-3-3 family.

This is 14-3-3-like protein D from Nicotiana tabacum (Common tobacco).